Reading from the N-terminus, the 361-residue chain is GTPase Obg (361 aa).

Positions 1 to 159 (MKFVDEAFID…KNLKLELKVL (159 aa)) constitute an Obg domain. In terms of domain architecture, OBG-type G spans 160 to 334 (ADVGLLGMPN…LIKTIYQHVK (175 aa)). GTP-binding positions include 166–173 (GMPNAGKS), 191–195 (FTTLH), 213–216 (DLPG), 284–287 (NKLD), and 315–317 (SAL). Ser-173 and Thr-193 together coordinate Mg(2+). The tract at residues 339–361 (SEQPVEEVDPRFVPLPPESPETP) is disordered. Residues 351-361 (VPLPPESPETP) show a composition bias toward pro residues.

This sequence belongs to the TRAFAC class OBG-HflX-like GTPase superfamily. OBG GTPase family. As to quaternary structure, monomer. It depends on Mg(2+) as a cofactor.

It is found in the cytoplasm. An essential GTPase which binds GTP, GDP and possibly (p)ppGpp with moderate affinity, with high nucleotide exchange rates and a fairly low GTP hydrolysis rate. Plays a role in control of the cell cycle, stress response, ribosome biogenesis and in those bacteria that undergo differentiation, in morphogenesis control. This is GTPase Obg from Polaromonas sp. (strain JS666 / ATCC BAA-500).